The sequence spans 363 residues: 3-dehydroquinate synthase (363 aa).

NAD(+) contacts are provided by residues 103–107, 127–128, lysine 139, lysine 148, and 166–169; these read GAVGD, TT, and FSET. Positions 181, 243, and 260 each coordinate Zn(2+).

Belongs to the sugar phosphate cyclases superfamily. Dehydroquinate synthase family. Requires Co(2+) as cofactor. The cofactor is Zn(2+). It depends on NAD(+) as a cofactor.

The protein resides in the cytoplasm. It catalyses the reaction 7-phospho-2-dehydro-3-deoxy-D-arabino-heptonate = 3-dehydroquinate + phosphate. It functions in the pathway metabolic intermediate biosynthesis; chorismate biosynthesis; chorismate from D-erythrose 4-phosphate and phosphoenolpyruvate: step 2/7. In terms of biological role, catalyzes the conversion of 3-deoxy-D-arabino-heptulosonate 7-phosphate (DAHP) to dehydroquinate (DHQ). The protein is 3-dehydroquinate synthase of Lysinibacillus sphaericus (strain C3-41).